A 100-amino-acid chain; its full sequence is Urease subunit gamma (100 aa).

Belongs to the urease gamma subunit family. In terms of assembly, heterotrimer of UreA (gamma), UreB (beta) and UreC (alpha) subunits. Three heterotrimers associate to form the active enzyme.

The protein localises to the cytoplasm. The enzyme catalyses urea + 2 H2O + H(+) = hydrogencarbonate + 2 NH4(+). The protein operates within nitrogen metabolism; urea degradation; CO(2) and NH(3) from urea (urease route): step 1/1. In Ectopseudomonas mendocina (strain ymp) (Pseudomonas mendocina), this protein is Urease subunit gamma.